Reading from the N-terminus, the 293-residue chain is MPWIQLKLNTTGANAEELSDALMEAGAVSITFQDTHDTPVFEPLPGETRLWGDTDVIGLFDAETDMKDVVAILEQHPLLGAGFAHKIEQLEDKDWEREWMDNFHPMRFGERLWICPSWRDIPDENAVNVMLDPGLAFGTGTHPTTSLCLQWLDGLDLNGKTVIDFGCGSGILAIAALKLGAAKAIGVDIDPQAIQASRDNAERNGVSDRLELYLPKDQPDAMKADVVVANILAGPLRELAPLISVLPVEGGLLGLSGILASQAESVCDAYAELFTLDPVVEKEEWCRITGRKK.

Thr-145, Gly-166, Asp-188, and Asn-230 together coordinate S-adenosyl-L-methionine.

Belongs to the methyltransferase superfamily. PrmA family.

Its subcellular location is the cytoplasm. It carries out the reaction L-lysyl-[protein] + 3 S-adenosyl-L-methionine = N(6),N(6),N(6)-trimethyl-L-lysyl-[protein] + 3 S-adenosyl-L-homocysteine + 3 H(+). In terms of biological role, methylates ribosomal protein L11. The polypeptide is Ribosomal protein L11 methyltransferase (Salmonella arizonae (strain ATCC BAA-731 / CDC346-86 / RSK2980)).